Consider the following 145-residue polypeptide: Putative antiporter subunit mnhG2 (145 aa).

3 consecutive transmembrane segments (helical) span residues 11–31 (IAAV…IGIV), 51–71 (VLLT…FFSV), and 72–92 (RLLL…HLVA).

Belongs to the CPA3 antiporters (TC 2.A.63) subunit G family. In terms of assembly, may form a heterooligomeric complex that consists of seven subunits: mnhA2, mnhB2, mnhC2, mnhD2, mnhE2, mnhF2 and mnhG2.

It is found in the cell membrane. The sequence is that of Putative antiporter subunit mnhG2 (mnhG2) from Staphylococcus aureus (strain JH9).